A 72-amino-acid chain; its full sequence is Mitotic-spindle organizing protein 1 (72 aa).

It belongs to the MOZART1 family. In terms of assembly, part of the gamma-tubulin complex.

It is found in the cytoplasm. It localises to the cytoskeleton. The protein resides in the microtubule organizing center. The protein localises to the centrosome. Its subcellular location is the spindle. Its function is as follows. Required for gamma-tubulin complex recruitment to the centrosome. The protein is Mitotic-spindle organizing protein 1 (mzt1) of Xenopus laevis (African clawed frog).